The chain runs to 458 residues: A-type ATP synthase subunit B (458 aa).

The protein belongs to the ATPase alpha/beta chains family. As to quaternary structure, has multiple subunits with at least A(3), B(3), C, D, E, F, H, I and proteolipid K(x).

It localises to the cell membrane. In terms of biological role, component of the A-type ATP synthase that produces ATP from ADP in the presence of a proton gradient across the membrane. The B chain is a regulatory subunit. In Methanocorpusculum labreanum (strain ATCC 43576 / DSM 4855 / Z), this protein is A-type ATP synthase subunit B.